Reading from the N-terminus, the 232-residue chain is Large ribosomal subunit protein uL1 (232 aa).

It belongs to the universal ribosomal protein uL1 family. In terms of assembly, part of the 50S ribosomal subunit.

In terms of biological role, binds directly to 23S rRNA. The L1 stalk is quite mobile in the ribosome, and is involved in E site tRNA release. Functionally, protein L1 is also a translational repressor protein, it controls the translation of the L11 operon by binding to its mRNA. This Aromatoleum aromaticum (strain DSM 19018 / LMG 30748 / EbN1) (Azoarcus sp. (strain EbN1)) protein is Large ribosomal subunit protein uL1.